The sequence spans 539 residues: Probable glycerol kinase (539 aa).

Residue threonine 12 participates in substrate binding. Arginine 16 is a binding site for ATP. Positions 86, 168, and 285 each coordinate substrate. Residues threonine 307, glycine 352, and 453–457 (GMAKN) each bind ATP.

This sequence belongs to the FGGY kinase family.

It carries out the reaction glycerol + ATP = sn-glycerol 3-phosphate + ADP + H(+). It functions in the pathway polyol metabolism; glycerol degradation via glycerol kinase pathway; sn-glycerol 3-phosphate from glycerol: step 1/1. The chain is Probable glycerol kinase (gk) from Dictyostelium discoideum (Social amoeba).